The chain runs to 284 residues: 2,3,4,5-tetrahydropyridine-2,6-dicarboxylate N-succinyltransferase (284 aa).

The substrate site is built by arginine 111 and aspartate 148.

The protein belongs to the transferase hexapeptide repeat family. As to quaternary structure, homotrimer.

The protein localises to the cytoplasm. The enzyme catalyses (S)-2,3,4,5-tetrahydrodipicolinate + succinyl-CoA + H2O = (S)-2-succinylamino-6-oxoheptanedioate + CoA. It participates in amino-acid biosynthesis; L-lysine biosynthesis via DAP pathway; LL-2,6-diaminopimelate from (S)-tetrahydrodipicolinate (succinylase route): step 1/3. This chain is 2,3,4,5-tetrahydropyridine-2,6-dicarboxylate N-succinyltransferase, found in Agrobacterium fabrum (strain C58 / ATCC 33970) (Agrobacterium tumefaciens (strain C58)).